Reading from the N-terminus, the 786-residue chain is Calcium-independent phospholipase A2-gamma (786 aa).

Residue Asn4 is glycosylated (N-linked (GlcNAc...) asparagine). Disordered stretches follow at residues 158 to 180, 225 to 285, and 321 to 348; these read KKYS…IIDK, KENS…SLPI, and SKSQ…EEKK. Basic and acidic residues predominate over residues 225-245; the sequence is KENSHFQEKSELEGKKVEEGK. 2 stretches are compositionally biased toward polar residues: residues 246–258 and 266–285; these read SSSL…TSQA and SAGT…SLPI. Residues 449–644 enclose the PNPLA domain; that stretch reads LTIDGGGTRG…LLNNPSALAM (196 aa). The short motif at 453 to 458 is the GXGXXG element; the sequence is GGGTRG. A helical membrane pass occupies residues 483 to 503; the sequence is ICGVSTGAILAFMLGLFHLPL. The short motif at 485–489 is the GXSXG element; the sequence is GVSTG. The active-site Nucleophile is the Ser487. The Proton acceptor role is filled by Asp631. The short motif at 631 to 633 is the DGA/G element; the sequence is DGG. Lys740 is subject to N6-succinyllysine.

As to expression, expressed in kidney, heart and brain.

Its subcellular location is the endoplasmic reticulum membrane. The protein localises to the mitochondrion membrane. It is found in the peroxisome membrane. The enzyme catalyses a 1,2-diacyl-sn-glycero-3-phosphocholine + H2O = a 1-acyl-sn-glycero-3-phosphocholine + a fatty acid + H(+). It carries out the reaction a 1,2-diacyl-sn-glycero-3-phosphocholine + H2O = a 2-acyl-sn-glycero-3-phosphocholine + a fatty acid + H(+). It catalyses the reaction a 1,2-diacyl-sn-glycero-3-phosphoethanolamine + H2O = a 1-acyl-sn-glycero-3-phosphoethanolamine + a fatty acid + H(+). The catalysed reaction is a 1-O-(1Z-alkenyl)-2-acyl-sn-glycero-3-phosphocholine + H2O = a 1-O-(1Z-alkenyl)-sn-glycero-3-phosphocholine + a fatty acid + H(+). The enzyme catalyses a 1-acyl-sn-glycero-3-phosphocholine + H2O = sn-glycerol 3-phosphocholine + a fatty acid + H(+). It carries out the reaction 1-acyl-2-(9Z,12Z)-octadecadienoyl-sn-glycero-3-phosphocholine + H2O = a 1-acyl-sn-glycero-3-phosphocholine + (9Z,12Z)-octadecadienoate + H(+). It catalyses the reaction 1-acyl-2-(5Z,8Z,11Z,14Z-eicosatetraenoyl)-sn-glycero-3-phosphocholine + H2O = a 1-acyl-sn-glycero-3-phosphocholine + (5Z,8Z,11Z,14Z)-eicosatetraenoate + H(+). The catalysed reaction is 1-hexadecanoyl-2-(5Z,8Z,11Z,14Z-eicosatetraenoyl)-sn-glycero-3-phosphocholine + H2O = 1-hexadecanoyl-sn-glycero-3-phosphocholine + (5Z,8Z,11Z,14Z)-eicosatetraenoate + H(+). The enzyme catalyses 1-octadecanoyl-2-(9Z-octadecenoyl)-sn-glycero-3-phosphocholine + H2O = 1-octadecanoyl-sn-glycero-3-phosphocholine + (9Z)-octadecenoate + H(+). It carries out the reaction 1-hexadecanoyl-2-(9Z-octadecenoyl)-sn-glycero-3-phosphocholine + H2O = 1-hexadecanoyl-sn-glycero-3-phosphocholine + (9Z)-octadecenoate + H(+). It catalyses the reaction 1-hexadecanoyl-2-(9Z,12Z-octadecadienoyl)-sn-glycero-3-phosphocholine + H2O = (9Z,12Z)-octadecadienoate + 1-hexadecanoyl-sn-glycero-3-phosphocholine + H(+). The catalysed reaction is 1-acyl-2-(9Z,12Z)-octadecadienoyl-sn-glycero-3-phosphoethanolamine + H2O = a 1-acyl-sn-glycero-3-phosphoethanolamine + (9Z,12Z)-octadecadienoate + H(+). The enzyme catalyses 1-acyl-2-(5Z,8Z,11Z,14Z)-eicosatetraenoyl-sn-glycero-3-phosphoethanolamine + H2O = a 1-acyl-sn-glycero-3-phosphoethanolamine + (5Z,8Z,11Z,14Z)-eicosatetraenoate + H(+). It carries out the reaction 1-hexadecanoyl-2-(5Z,8Z,11Z,14Z-eicosatetraenoyl)-sn-glycero-3-phosphoethanolamine + H2O = 1-hexadecanoyl-sn-glycero-3-phosphoethanolamine + (5Z,8Z,11Z,14Z)-eicosatetraenoate + H(+). It catalyses the reaction 1-hexadecanoyl-2-(5Z,8Z,11Z,14Z-eicosatetraenoyl)-sn-glycero-3-phosphocholine + H2O = 2-(5Z,8Z,11Z,14Z)-eicosatetraenoyl-sn-glycero-3-phosphocholine + hexadecanoate + H(+). The catalysed reaction is 1-octadecanoyl-2-(9Z-octadecenoyl)-sn-glycero-3-phosphocholine + H2O = 2-(9Z-octadecenoyl)-sn-glycero-3-phosphocholine + octadecanoate + H(+). The enzyme catalyses 1-hexadecanoyl-2-(4Z,7Z,10Z,13Z,16Z,19Z-docosahexaenoyl)-sn-glycero-3-phosphocholine + H2O = 2-(4Z,7Z,10Z,13Z,16Z,19Z-docosahexaenoyl)-sn-glycero-3-phosphocholine + hexadecanoate + H(+). It carries out the reaction 1-O-(1Z)-hexadecenyl-2 (5Z,8Z,11Z,14Z)-eicosatetraenoyl-sn-glycero-3-phosphocholine + H2O = 1-(1Z-hexadecenyl)-sn-glycero-3-phosphocholine + (5Z,8Z,11Z,14Z)-eicosatetraenoate + H(+). It catalyses the reaction 1-O-(1Z-hexadecenyl)-2-(9Z-octadecenoyl)-sn-glycero-3-phosphocholine + H2O = 1-(1Z-hexadecenyl)-sn-glycero-3-phosphocholine + (9Z)-octadecenoate + H(+). The catalysed reaction is 1-hexadecanoyl-sn-glycero-3-phosphocholine + H2O = sn-glycerol 3-phosphocholine + hexadecanoate + H(+). The enzyme catalyses 1',3'-bis-[1,2-di-(9Z,12Z-octadecadienoyl)-sn-glycero-3-phospho]-glycerol + H2O = 1'-[1,2-di-(9Z,12Z-octadecadienoyl)-sn-glycero-3-phospho]-3'-[1-(9Z,12Z-octadecadienoyl)-sn-glycero-3-phospho]-glycerol + (9Z,12Z)-octadecadienoate + H(+). It carries out the reaction 1'-[1-acyl-2-(9-hydroxy-(10E,12Z)-octadecadienoyl)-sn-glycero-3-phospho]-3'-[1,2-diacyl-sn-glycero-3-phospho]-glycerol + H2O = 9-hydroxy-(10E,12Z)-octadecadienoate + 1'-[1,2-diacyl-sn-glycero-3-phospho],3'-[1-acyl-sn-glycero-3-phospho]-glycerol + H(+). The protein operates within phospholipid metabolism. With respect to regulation, calcium-independent phospholipase. Its function is as follows. Calcium-independent and membrane-bound phospholipase, that catalyzes the esterolytic cleavage of fatty acids from glycerophospholipids to yield free fatty acids and lysophospholipids, hence regulating membrane physical properties and the release of lipid second messengers and growth factors. Hydrolyzes phosphatidylethanolamine, phosphatidylcholine and probably phosphatidylinositol with a possible preference for the former. Has also a broad substrate specificity in terms of fatty acid moieties, hydrolyzing saturated and mono-unsaturated fatty acids at nearly equal rates from either the sn-1 or sn-2 position in diacyl phosphatidylcholine. However, has a weak activity toward polyunsaturated fatty acids at the sn-2 position, and thereby favors the production of 2-arachidonoyl lysophosphatidylcholine, a key branch point metabolite in eicosanoid signaling. On the other hand, can produce arachidonic acid from the sn-1 position of diacyl phospholipid and from the sn-2 position of arachidonate-containing plasmalogen substrates. Therefore, plays an important role in the mobilization of arachidonic acid in response to cellular stimuli and the generation of lipid second messengers. Can also hydrolyze lysophosphatidylcholine. In the mitochondrial compartment, catalyzes the hydrolysis and release of oxidized aliphatic chains from cardiolipin and integrates mitochondrial bioenergetics and signaling. It is essential for maintaining efficient bioenergetic mitochondrial function through tailoring mitochondrial membrane lipid metabolism and composition. The polypeptide is Calcium-independent phospholipase A2-gamma (Oryctolagus cuniculus (Rabbit)).